The following is a 671-amino-acid chain: DNA ligase (671 aa).

NAD(+)-binding positions include 36 to 40 (DAEYD), 85 to 86 (SL), and glutamate 116. The active-site N6-AMP-lysine intermediate is the lysine 118. Residues arginine 139, glutamate 176, lysine 292, and lysine 316 each contribute to the NAD(+) site. Zn(2+) is bound by residues cysteine 410, cysteine 413, cysteine 428, and cysteine 434. The region spanning 591–671 (QKGGRFQGMT…QFLAMFSEKE (81 aa)) is the BRCT domain.

The protein belongs to the NAD-dependent DNA ligase family. LigA subfamily. The cofactor is Mg(2+). Mn(2+) is required as a cofactor.

It catalyses the reaction NAD(+) + (deoxyribonucleotide)n-3'-hydroxyl + 5'-phospho-(deoxyribonucleotide)m = (deoxyribonucleotide)n+m + AMP + beta-nicotinamide D-nucleotide.. Its function is as follows. DNA ligase that catalyzes the formation of phosphodiester linkages between 5'-phosphoryl and 3'-hydroxyl groups in double-stranded DNA using NAD as a coenzyme and as the energy source for the reaction. It is essential for DNA replication and repair of damaged DNA. This chain is DNA ligase, found in Acidithiobacillus ferrooxidans (strain ATCC 23270 / DSM 14882 / CIP 104768 / NCIMB 8455) (Ferrobacillus ferrooxidans (strain ATCC 23270)).